The chain runs to 303 residues: Protoporphyrin uptake protein 1 (303 aa).

The Extracellular segment spans residues 1–18; that stretch reads MSTTDSGFVLYHYTPSKA. A helical membrane pass occupies residues 19–39; that stretch reads AAIVFVVLFIIMTVIFAVQTL. The Cytoplasmic segment spans residues 40-76; that stretch reads YAARKSSKALKNNPFESSDDKVDSLEDAEYKQLKITP. Residues 77-97 form a helical membrane-spanning segment; the sequence is TVFAFIPFFTGCIMEAVGYIG. The Extracellular portion of the chain corresponds to 98-111; that stretch reads RALSSSNPERTTPY. A helical membrane pass occupies residues 112–132; it reads IIQSVLLLVAPALIAATIYMI. Residues 133–154 lie on the Cytoplasmic side of the membrane; that stretch reads FGRLLHVMRCQSLILISARFGT. A helical transmembrane segment spans residues 155–175; that stretch reads TFFVVGDVFSFFLQAAGGGLM. Topologically, residues 176–183 are extracellular; it reads SKAGSTKT. A helical transmembrane segment spans residues 184-204; sequence GSGLITAGLFVQVIFFGFFII. Over 205–226 the chain is Cytoplasmic; it reads NEIRFTVNVKRRCLFYEDISRK. Residues 227-247 form a helical membrane-spanning segment; it reads WIFVNATLLLSSMLILLRSIV. At 248–264 the chain is on the extracellular side; it reads RIVEFIQGFNGYIISHE. A helical transmembrane segment spans residues 265–285; that stretch reads YFIYVFDAVPMLLVIIAFSVG. Residues 286 to 303 are Cytoplasmic-facing; the sequence is SFFGNVFDVIKECQTLSN.

The protein belongs to the lipid-translocating exporter (LTE) (TC 9.A.26.1) family. Post-translationally, N-glycosylated.

The protein localises to the cell membrane. Its function is as follows. Involved in inducible protoporphyrin IX influx and heme efflux. This Saccharomyces cerevisiae (strain ATCC 204508 / S288c) (Baker's yeast) protein is Protoporphyrin uptake protein 1 (PUG1).